The primary structure comprises 279 residues: Glycerol uptake facilitator protein (279 aa).

Topologically, residues 1 to 8 (MTTAAPTP) are cytoplasmic. The chain crosses the membrane as a helical span at residues 9–37 (SLFGQCLAEFLGTALLIFFGTGCVAALKV). Over 38 to 42 (AGASF) the chain is Periplasmic. The chain crosses the membrane as a helical span at residues 43-63 (GLWEISIIWGVGVSMAIYLSA). The Cytoplasmic portion of the chain corresponds to 64-66 (GVS). Residues 67-70 (GAHL) lie within the membrane without spanning it. An NPA 1 motif is present at residues 71–73 (NPA). Positions 71 to 81 (NPAVSIALWLF) form an intramembrane region, helical. At 82–87 (AGFEGR) the chain is on the cytoplasmic side. Residues 88 to 111 (KLPFYITAQVAGAFCAAALVYTLY) traverse the membrane as a helical segment. Over 112 to 146 (SSLFIEFEQAQNIVRGSQDSLALASVFSTYPHPAL) the chain is Periplasmic. A helical transmembrane segment spans residues 147–172 (SVGQAFLVEVVITAILMAVIMALTDD). Over 173–180 (GNGLPRGP) the chain is Cytoplasmic. A helical transmembrane segment spans residues 181–197 (LAPLLIGLLIAVIGSAM). The Periplasmic portion of the chain corresponds to 198–201 (GPLT). An intramembrane segment occupies 202-205 (GFAM). The NPA 2 signature appears at 206–208 (NPA). An intramembrane region (helical) is located at residues 206–219 (NPARDFGPKLMTYL). The Periplasmic segment spans residues 220–234 (AGWGPIAFTGGREIP). Residues 235–257 (YFLVPIFAPILGACLGAGGYRVL) form a helical membrane-spanning segment. Residues 258–279 (IARHLPSAAAPAEAEPEKVRAS) lie on the Cytoplasmic side of the membrane.

Belongs to the MIP/aquaporin (TC 1.A.8) family.

The protein localises to the cell inner membrane. It carries out the reaction glycerol(in) = glycerol(out). Functionally, mediates glycerol diffusion across the cytoplasmic membrane via a pore-type mechanism. This Pseudomonas aeruginosa (strain ATCC 15692 / DSM 22644 / CIP 104116 / JCM 14847 / LMG 12228 / 1C / PRS 101 / PAO1) protein is Glycerol uptake facilitator protein (glpF).